Here is a 69-residue protein sequence, read N- to C-terminus: Large ribosomal subunit protein eL38 (69 aa).

It belongs to the eukaryotic ribosomal protein eL38 family.

The polypeptide is Large ribosomal subunit protein eL38 (RPL38) (Solanum lycopersicum (Tomato)).